A 27-amino-acid chain; its full sequence is Phospholipase A2 2 (27 aa).

Positions 1 to 27 (FMKVIDPGTKWCGPGNKAADDTDNGKN) are disordered. The Ca(2+) site is built by Trp-11, Gly-13, and Gly-15. A compositionally biased stretch (basic and acidic residues) spans 18–27 (AADDTDNGKN).

Belongs to the phospholipase A2 family. Ca(2+) serves as cofactor. As to expression, expressed by the venom gland.

It is found in the secreted. The catalysed reaction is a 1,2-diacyl-sn-glycero-3-phosphocholine + H2O = a 1-acyl-sn-glycero-3-phosphocholine + a fatty acid + H(+). Its function is as follows. PLA2 catalyzes the calcium-dependent hydrolysis of the 2-acyl groups in 3-sn-phosphoglycerides. In Opisthacanthus cayaporum (South American scorpion), this protein is Phospholipase A2 2.